The primary structure comprises 441 residues: Methylenetetrahydrofolate--tRNA-(uracil-5-)-methyltransferase TrmFO (441 aa).

10-15 is an FAD binding site; sequence GAGLAG.

It belongs to the MnmG family. TrmFO subfamily. It depends on FAD as a cofactor.

The protein resides in the cytoplasm. The catalysed reaction is uridine(54) in tRNA + (6R)-5,10-methylene-5,6,7,8-tetrahydrofolate + NADH + H(+) = 5-methyluridine(54) in tRNA + (6S)-5,6,7,8-tetrahydrofolate + NAD(+). It carries out the reaction uridine(54) in tRNA + (6R)-5,10-methylene-5,6,7,8-tetrahydrofolate + NADPH + H(+) = 5-methyluridine(54) in tRNA + (6S)-5,6,7,8-tetrahydrofolate + NADP(+). Its function is as follows. Catalyzes the folate-dependent formation of 5-methyl-uridine at position 54 (M-5-U54) in all tRNAs. The protein is Methylenetetrahydrofolate--tRNA-(uracil-5-)-methyltransferase TrmFO of Desulforamulus reducens (strain ATCC BAA-1160 / DSM 100696 / MI-1) (Desulfotomaculum reducens).